An 822-amino-acid chain; its full sequence is Penicillin-binding protein 1A (822 aa).

The Cytoplasmic segment spans residues 1 to 5 (MRLLK). The helical; Signal-anchor for type II membrane protein transmembrane segment at 6–26 (FLWWTCVTLICGVLLSFSGAY) threads the bilayer. The Periplasmic portion of the chain corresponds to 27–822 (LYLSPSLPSV…DDEGAPIDLF (796 aa)). Residues 48–216 (LKVYSEDGKL…SRYNPLVNPT (169 aa)) form a transglycosylase region. The active-site Proton donor; for transglycosylase activity is the glutamate 86. The interval 403–744 (IRVQRQEDGT…GTVALPIWIR (342 aa)) is transpeptidase. The Acyl-ester intermediate; for transpeptidase activity role is filled by serine 461. Disordered regions lie at residues 614–654 (AADA…FEPT) and 790–822 (KNED…IDLF). The span at 812–822 (PDDEGAPIDLF) shows a compositional bias: acidic residues.

This sequence in the N-terminal section; belongs to the glycosyltransferase 51 family. It in the C-terminal section; belongs to the transpeptidase family.

The protein localises to the cell inner membrane. The enzyme catalyses [GlcNAc-(1-&gt;4)-Mur2Ac(oyl-L-Ala-gamma-D-Glu-L-Lys-D-Ala-D-Ala)](n)-di-trans,octa-cis-undecaprenyl diphosphate + beta-D-GlcNAc-(1-&gt;4)-Mur2Ac(oyl-L-Ala-gamma-D-Glu-L-Lys-D-Ala-D-Ala)-di-trans,octa-cis-undecaprenyl diphosphate = [GlcNAc-(1-&gt;4)-Mur2Ac(oyl-L-Ala-gamma-D-Glu-L-Lys-D-Ala-D-Ala)](n+1)-di-trans,octa-cis-undecaprenyl diphosphate + di-trans,octa-cis-undecaprenyl diphosphate + H(+). It carries out the reaction Preferential cleavage: (Ac)2-L-Lys-D-Ala-|-D-Ala. Also transpeptidation of peptidyl-alanyl moieties that are N-acyl substituents of D-alanine.. The protein operates within cell wall biogenesis; peptidoglycan biosynthesis. In terms of biological role, cell wall formation. Synthesis of cross-linked peptidoglycan from the lipid intermediates. The enzyme has a penicillin-insensitive transglycosylase N-terminal domain (formation of linear glycan strands) and a penicillin-sensitive transpeptidase C-terminal domain (cross-linking of the peptide subunits). In Pseudomonas aeruginosa (strain ATCC 15692 / DSM 22644 / CIP 104116 / JCM 14847 / LMG 12228 / 1C / PRS 101 / PAO1), this protein is Penicillin-binding protein 1A (mrcA).